We begin with the raw amino-acid sequence, 333 residues long: Probable G-protein coupled receptor 33 (333 aa).

At 1–30 (MDLINSTDYLINASTLVRNSTQFLAPASKM) the chain is on the extracellular side. 3 N-linked (GlcNAc...) asparagine glycosylation sites follow: Asn-5, Asn-12, and Asn-19. The helical transmembrane segment at 31–53 (IIALSLYISSIIGTITNGLYLWV) threads the bilayer. Residues 54-64 (LRFKMKQTVNT) lie on the Cytoplasmic side of the membrane. Residues 65–86 (LLFFHLILSYFISTMILPFMAT) traverse the membrane as a helical segment. The Extracellular segment spans residues 87-103 (SQLQDNHWNFGTALCKV). A disulfide bridge connects residues Cys-101 and Cys-179. The helical transmembrane segment at 104-124 (FNGTLSLGMFTSVFFLSAIGL) threads the bilayer. Over 125 to 143 (DRYLLTLHPVWSQQHRTPR) the chain is Cytoplasmic. The chain crosses the membrane as a helical span at residues 144–165 (WASSIVLGVWISAAALSIPYLI). The Extracellular segment spans residues 166–209 (FRETHHDRKGKVTCQNNYAVSTNWESKEMQASRQWIHVACFISR). A helical transmembrane segment spans residues 210-230 (FLLGFLLPFFIIIFCYERVAS). The Cytoplasmic portion of the chain corresponds to 231–246 (KVKERSLFKSSKPFKV). The chain crosses the membrane as a helical span at residues 247-268 (MMTAIISFFVCWMPYHIHQGLL). At 269–283 (LTTNQSLLLELTLIL) the chain is on the extracellular side. N-linked (GlcNAc...) asparagine glycosylation occurs at Asn-272. The chain crosses the membrane as a helical span at residues 284 to 303 (TVLTTSFNTIFSPTLYLFVG). Residues 304-333 (ENFKKVFKKSILALFESTFSEDSSVERTQT) lie on the Cytoplasmic side of the membrane.

Belongs to the G-protein coupled receptor 1 family. Expressed in spleen, lung, heart, liver, kidney, pancreas, thymus, gonads and leukocytes.

Its subcellular location is the cell membrane. In terms of biological role, orphan receptor; could be a chemoattractant receptor. The polypeptide is Probable G-protein coupled receptor 33 (GPR33) (Homo sapiens (Human)).